The following is a 384-amino-acid chain: NAD(P) transhydrogenase subunit alpha part 1 (384 aa).

The interval 126 to 136 (PRISRAQSMDI) is RQD loop; involved in interaction with PntB. NAD(+) contacts are provided by residues 127–129 (RIS), 132–135 (QSMD), 180–182 (VGV), 202–204 (DVR), glycine 234, glutamine 247, and leucine 266.

Belongs to the AlaDH/PNT family. In terms of assembly, heterotrimer of two alpha chains and a beta (PntB) chain; in Rhodospirillum, the alpha chain is made of two subunits (PntAA and PntAB) and forms a dimer.

The catalysed reaction is NAD(+) + NADPH + H(+)(in) = NADH + NADP(+) + H(+)(out). The transhydrogenation between NADH and NADP is coupled to respiration and ATP hydrolysis and functions as a proton pump across the membrane. The sequence is that of NAD(P) transhydrogenase subunit alpha part 1 (pntAA) from Rhodospirillum rubrum (strain ATCC 11170 / ATH 1.1.1 / DSM 467 / LMG 4362 / NCIMB 8255 / S1).